A 498-amino-acid chain; its full sequence is Ammonium transporter 1 member 3 (498 aa).

11 helical membrane passes run 41 to 61 (LLFS…LCAG), 76 to 96 (VLDA…FAFG), 122 to 142 (FFLF…GSIA), 150 to 170 (YLIY…HWFW), 194 to 214 (FAGS…GAFI), 238 to 258 (LVVL…PGSF), 277 to 299 (AVGR…TLYG), 307 to 327 (WNVT…TAGC), 329 to 349 (VVDP…LIGC), 362 to 382 (LEAT…TALF), and 414 to 434 (IVQI…LFYV). The disordered stretch occupies residues 473–498 (RAKSAAETARVEPRKSPEQAAAGQFV).

The protein belongs to the ammonia transporter channel (TC 1.A.11.2) family. In terms of tissue distribution, expressed in roots.

It localises to the membrane. In terms of biological role, ammonium transporter probably involved in ammonium uptake from the soil. In Oryza sativa subsp. japonica (Rice), this protein is Ammonium transporter 1 member 3 (AMT1-3).